The chain runs to 598 residues: Elongation factor 4 (598 aa).

Residues 4 to 181 enclose the tr-type G domain; it reads SKIRNFSIIA…AVIEKIPAPK (178 aa). Residues 16 to 21 and 128 to 131 each bind GTP; these read DHGKST and NKID.

This sequence belongs to the TRAFAC class translation factor GTPase superfamily. Classic translation factor GTPase family. LepA subfamily.

It is found in the cell membrane. It catalyses the reaction GTP + H2O = GDP + phosphate + H(+). In terms of biological role, required for accurate and efficient protein synthesis under certain stress conditions. May act as a fidelity factor of the translation reaction, by catalyzing a one-codon backward translocation of tRNAs on improperly translocated ribosomes. Back-translocation proceeds from a post-translocation (POST) complex to a pre-translocation (PRE) complex, thus giving elongation factor G a second chance to translocate the tRNAs correctly. Binds to ribosomes in a GTP-dependent manner. The chain is Elongation factor 4 from Mycoplasma mobile (strain ATCC 43663 / 163K / NCTC 11711) (Mesomycoplasma mobile).